Reading from the N-terminus, the 172-residue chain is dCTP deaminase (172 aa).

DCTP is bound by residues 97-102 (RSSFAR) and D113. The Proton donor/acceptor role is filled by E123. Positions 155 and 162 each coordinate dCTP.

This sequence belongs to the dCTP deaminase family. As to quaternary structure, homotrimer.

It carries out the reaction dCTP + H2O + H(+) = dUTP + NH4(+). It participates in pyrimidine metabolism; dUMP biosynthesis; dUMP from dCTP (dUTP route): step 1/2. Its function is as follows. Catalyzes the deamination of dCTP to dUTP. The protein is dCTP deaminase of Metallosphaera sedula (strain ATCC 51363 / DSM 5348 / JCM 9185 / NBRC 15509 / TH2).